Here is a 254-residue protein sequence, read N- to C-terminus: Alcohol dehydrogenase 2 (254 aa).

10–33 (FVAGLGGIGFDTSREIVKRGPKNL) is an NAD(+) binding site. Ser-138 is a binding site for substrate. The active-site Proton acceptor is Tyr-151.

It belongs to the short-chain dehydrogenases/reductases (SDR) family. As to quaternary structure, homodimer.

It catalyses the reaction a primary alcohol + NAD(+) = an aldehyde + NADH + H(+). The enzyme catalyses a secondary alcohol + NAD(+) = a ketone + NADH + H(+). The chain is Alcohol dehydrogenase 2 (Adh2) from Drosophila mojavensis (Fruit fly).